Here is a 158-residue protein sequence, read N- to C-terminus: Small ribosomal subunit protein uS9 (158 aa).

It belongs to the universal ribosomal protein uS9 family.

The polypeptide is Small ribosomal subunit protein uS9 (Rhodopseudomonas palustris (strain BisA53)).